The chain runs to 527 residues: Glutamate--cysteine ligase (527 aa).

The protein belongs to the glutamate--cysteine ligase type 1 family. Type 1 subfamily.

The catalysed reaction is L-cysteine + L-glutamate + ATP = gamma-L-glutamyl-L-cysteine + ADP + phosphate + H(+). It participates in sulfur metabolism; glutathione biosynthesis; glutathione from L-cysteine and L-glutamate: step 1/2. In Bordetella petrii (strain ATCC BAA-461 / DSM 12804 / CCUG 43448), this protein is Glutamate--cysteine ligase.